Consider the following 483-residue polypeptide: Protein PLASTID TRANSCRIPTIONALLY ACTIVE 14 (483 aa).

The transit peptide at 1–62 (MASSVSLQFL…TQPFPLFQSP (62 aa)) directs the protein to the chloroplast. The SET domain occupies 80–325 (YKIGYVRSVR…KGEEMTINYM (246 aa)). Y324 contacts S-adenosyl-L-methionine.

Belongs to the class V-like SAM-binding methyltransferase superfamily. In terms of assembly, component of the transcriptionally active chromosome (TAC) complexes. Interacts with PTAC12/HMR/PAP5 and PTAC7. Binds to SL1/MTERF3. Mostly expressed in leaves, flowers and seedlings, and, to a lower extent, in stems and roots.

It localises to the plastid. Its subcellular location is the chloroplast thylakoid. Essential for chloroplast development, especially for thylakoid formation. Involved in plastid gene expression, probably by maintaining plastid-encoded RNA polymerase (PEP) activity. This is Protein PLASTID TRANSCRIPTIONALLY ACTIVE 14 from Arabidopsis thaliana (Mouse-ear cress).